Consider the following 265-residue polypeptide: Diphthine synthase (265 aa).

S-adenosyl-L-methionine contacts are provided by residues Leu10, Asp87, Val90, 115-116, Leu166, Ala209, and His234; that span reads SI.

It belongs to the diphthine synthase family. In terms of assembly, homodimer.

It carries out the reaction 2-[(3S)-amino-3-carboxypropyl]-L-histidyl-[translation elongation factor 2] + 3 S-adenosyl-L-methionine = diphthine-[translation elongation factor 2] + 3 S-adenosyl-L-homocysteine + 3 H(+). It functions in the pathway protein modification; peptidyl-diphthamide biosynthesis. S-adenosyl-L-methionine-dependent methyltransferase that catalyzes the trimethylation of the amino group of the modified target histidine residue in translation elongation factor 2 (EF-2), to form an intermediate called diphthine. The three successive methylation reactions represent the second step of diphthamide biosynthesis. The chain is Diphthine synthase from Pyrococcus horikoshii (strain ATCC 700860 / DSM 12428 / JCM 9974 / NBRC 100139 / OT-3).